Consider the following 136-residue polypeptide: Protein NrdI (136 aa).

This sequence belongs to the NrdI family.

Its function is as follows. Probably involved in ribonucleotide reductase function. This chain is Protein NrdI, found in Escherichia coli (strain 55989 / EAEC).